A 234-amino-acid polypeptide reads, in one-letter code: ATP-dependent dethiobiotin synthetase BioD (234 aa).

12-17 (GAGKTI) serves as a coordination point for ATP. Thr-16 lines the Mg(2+) pocket. Lys-39 is a catalytic residue. Thr-43 is a substrate binding site. Residues Asp-47, 108–111 (EGLG), 168–169 (SC), and 200–202 (PYL) each bind ATP. Asp-47 and Glu-108 together coordinate Mg(2+).

Belongs to the dethiobiotin synthetase family. In terms of assembly, homodimer. Requires Mg(2+) as cofactor.

Its subcellular location is the cytoplasm. It catalyses the reaction (7R,8S)-7,8-diammoniononanoate + CO2 + ATP = (4R,5S)-dethiobiotin + ADP + phosphate + 3 H(+). The catalysed reaction is (7R,8S)-8-amino-7-(carboxyamino)nonanoate + ATP = (4R,5S)-dethiobiotin + ADP + phosphate + H(+). It participates in cofactor biosynthesis; biotin biosynthesis; biotin from 7,8-diaminononanoate: step 1/2. Its function is as follows. Catalyzes a mechanistically unusual reaction, the ATP-dependent insertion of CO2 between the N7 and N8 nitrogen atoms of 7,8-diaminopelargonic acid (DAPA, also called 7,8-diammoniononanoate) to form a ureido ring. This cyanobacterium does not encode bioA (which catalyzes the formation of the precursor for this reaction in the cannonical pathway), instead it encodes bioU, which replaces bioA and also performs the first half of the cannonical BioD reaction. Thus in this organism BioD has a different substrate. In Rippkaea orientalis (strain PCC 8801 / RF-1) (Cyanothece sp. (strain PCC 8801)), this protein is ATP-dependent dethiobiotin synthetase BioD.